The primary structure comprises 541 residues: MESQRNILLIGLLFVSFLLWQQWQADKAPKPVATESSLVANVASTHSADVPEADTGVPAAVAASKNLITVKTDQLDVQINPVGGDIVFAALVSHKMEQGKEQPFVLLEQTKDYTYIAQSGLIGRDGIDSSANGRAAFTTSATEFTLAEGQDTLEVPLTYVADNGVTYTKVFVFHRGKFNVDVDYKINNTSAAPLQVQMYGQIKQTIKPSESSMMMPTYRGGAFSTNDVRYEKYNFDDMAKSNLNQATLGGWAAMLQHYFVSAWVPPATDSNTIFSSVSAGGLANIGFRGAVYDIAPGASQEISSQFYVGPKDQAALSAISETLNLVVDYGFLWWLAVPIHWLLMFYQSFVGNWGVAIILITLTVRGLLFPLTKAQYTSMAKMRNLQPKLADLKERFGDDRQKMGQAMMELYKKEKVNPMGGCLPIILQMPIFIALYWVLLESFELRHAPFMLWIHDLSVQDPYYILPLLMGVSMFIMQKMQPIAPTMDPMQVKMMQWMPVIFTVFFLWFPSGLVLYWLVGNIVAIIQQKIIYAGLEKKGLK.

Transmembrane regions (helical) follow at residues 6-26 (NILL…WQAD), 325-345 (LVVD…LLMF), 349-369 (FVGN…GLLF), 420-440 (GGCL…WVLL), 457-477 (LSVQ…MFIM), and 500-520 (VIFT…WLVG).

This sequence belongs to the OXA1/ALB3/YidC family. Type 1 subfamily. As to quaternary structure, interacts with the Sec translocase complex via SecD. Specifically interacts with transmembrane segments of nascent integral membrane proteins during membrane integration.

The protein resides in the cell inner membrane. In terms of biological role, required for the insertion and/or proper folding and/or complex formation of integral membrane proteins into the membrane. Involved in integration of membrane proteins that insert both dependently and independently of the Sec translocase complex, as well as at least some lipoproteins. Aids folding of multispanning membrane proteins. The protein is Membrane protein insertase YidC of Shewanella sp. (strain W3-18-1).